Here is a 544-residue protein sequence, read N- to C-terminus: Chaperonin GroEL (544 aa).

Residues 30–33, lysine 51, 87–91, glycine 415, and aspartate 496 contribute to the ATP site; these read TLGP and DGTTT.

Belongs to the chaperonin (HSP60) family. As to quaternary structure, forms a cylinder of 14 subunits composed of two heptameric rings stacked back-to-back. Interacts with the co-chaperonin GroES.

Its subcellular location is the cytoplasm. The enzyme catalyses ATP + H2O + a folded polypeptide = ADP + phosphate + an unfolded polypeptide.. Together with its co-chaperonin GroES, plays an essential role in assisting protein folding. The GroEL-GroES system forms a nano-cage that allows encapsulation of the non-native substrate proteins and provides a physical environment optimized to promote and accelerate protein folding. In Granulibacter bethesdensis (strain ATCC BAA-1260 / CGDNIH1), this protein is Chaperonin GroEL.